The primary structure comprises 255 residues: Imidazole glycerol phosphate synthase subunit HisF (255 aa).

Catalysis depends on residues Asp11 and Asp130.

It belongs to the HisA/HisF family. Heterodimer of HisH and HisF.

Its subcellular location is the cytoplasm. The enzyme catalyses 5-[(5-phospho-1-deoxy-D-ribulos-1-ylimino)methylamino]-1-(5-phospho-beta-D-ribosyl)imidazole-4-carboxamide + L-glutamine = D-erythro-1-(imidazol-4-yl)glycerol 3-phosphate + 5-amino-1-(5-phospho-beta-D-ribosyl)imidazole-4-carboxamide + L-glutamate + H(+). The protein operates within amino-acid biosynthesis; L-histidine biosynthesis; L-histidine from 5-phospho-alpha-D-ribose 1-diphosphate: step 5/9. IGPS catalyzes the conversion of PRFAR and glutamine to IGP, AICAR and glutamate. The HisF subunit catalyzes the cyclization activity that produces IGP and AICAR from PRFAR using the ammonia provided by the HisH subunit. The sequence is that of Imidazole glycerol phosphate synthase subunit HisF from Rhodopseudomonas palustris (strain HaA2).